The sequence spans 255 residues: MLEARLSQTLLLKKIVDALKEIIAQGTLDCSENGLELQSMDNSHVSLVALSLASDCFEKFHCDRNVSLGLDLKSLGKVLKCANSDDAVTIKAVDRPEKITLSFESDGKERTADYELKLLNLDQDHMEIPKKDYTCFIQLPSSEFARICRDMSMFDESLTIACSSKGIRFLAKGDLGTANIQLSAGTAMDVSIEVQEPVTQSFAGRYLNTFTKATPLADRVKLYLSDERPLLVEYPIEDYGHIRYYLAPKVNDPDF.

The DNA-binding element occupies 61-80; it reads HCDRNVSLGLDLKSLGKVLK.

It belongs to the PCNA family. Homotrimer. Interacts with the catalytic subunits of two DNA polymerase complexes: PolD1 in the delta complex and PolE1/DNApol-epsilon255 in the epsilon complex.

The protein localises to the nucleus. Its subcellular location is the chromosome. The protein resides in the cytoplasm. Its function is as follows. Likely to be an auxiliary protein of DNA polymerase delta complex and is probably involved in the control of DNA replication and repair by increasing the polymerase's processibility. May function independently of PCNA during DNA repair. The sequence is that of Proliferating cell nuclear antigen 2 from Drosophila melanogaster (Fruit fly).